The sequence spans 249 residues: Flavin-dependent thymidylate synthase (249 aa).

The ThyX domain occupies Leu-7–Thr-235. Residues Glu-94–Arg-97, Gln-105–Arg-109, and Arg-174 each bind dUMP. FAD is bound by residues Arg-97–Arg-99 and Gln-105. The short motif at Arg-97–Ser-107 is the ThyX motif element. Residues Asn-190–Arg-192 and His-196 contribute to the FAD site. Arg-201 provides a ligand contact to dUMP. The Involved in ionization of N3 of dUMP, leading to its activation role is filled by Arg-201.

It belongs to the thymidylate synthase ThyX family. As to quaternary structure, homotetramer. Requires FAD as cofactor.

It catalyses the reaction dUMP + (6R)-5,10-methylene-5,6,7,8-tetrahydrofolate + NADPH + H(+) = dTMP + (6S)-5,6,7,8-tetrahydrofolate + NADP(+). The protein operates within pyrimidine metabolism; dTTP biosynthesis. Functionally, catalyzes the reductive methylation of 2'-deoxyuridine-5'-monophosphate (dUMP) to 2'-deoxythymidine-5'-monophosphate (dTMP) while utilizing 5,10-methylenetetrahydrofolate (mTHF) as the methyl donor, and NADPH and FADH(2) as the reductant. The protein is Flavin-dependent thymidylate synthase of Corynebacterium aurimucosum (strain ATCC 700975 / DSM 44827 / CIP 107346 / CN-1) (Corynebacterium nigricans).